The primary structure comprises 500 residues: Small ribosomal subunit protein uS3m (500 aa).

Belongs to the universal ribosomal protein uS3 family.

The protein resides in the mitochondrion. In Prototheca wickerhamii, this protein is Small ribosomal subunit protein uS3m (RPS3).